The following is a 157-amino-acid chain: Ribosome maturation factor RimP (157 aa).

The protein belongs to the RimP family.

The protein resides in the cytoplasm. Required for maturation of 30S ribosomal subunits. This chain is Ribosome maturation factor RimP, found in Lactococcus lactis subsp. cremoris (strain MG1363).